Here is a 233-residue protein sequence, read N- to C-terminus: UPF0502 protein YPTS_2082 (233 aa).

Belongs to the UPF0502 family.

The protein is UPF0502 protein YPTS_2082 of Yersinia pseudotuberculosis serotype IB (strain PB1/+).